The primary structure comprises 316 residues: HPr kinase/phosphorylase (316 aa).

Active-site residues include histidine 143 and lysine 164. 158-165 (GEAGSGKS) provides a ligand contact to ATP. Residue serine 165 coordinates Mg(2+). Aspartate 182 serves as the catalytic Proton acceptor; for phosphorylation activity. Proton donor; for dephosphorylation activity. Residues 206–215 (LEVRGLGVLN) form an important for the catalytic mechanism of both phosphorylation and dephosphorylation region. Glutamate 207 is a binding site for Mg(2+). Arginine 251 is an active-site residue. Residues 272 to 277 (PVMPGR) form an important for the catalytic mechanism of dephosphorylation region.

This sequence belongs to the HPrK/P family. In terms of assembly, homohexamer. Mg(2+) serves as cofactor.

It catalyses the reaction [HPr protein]-L-serine + ATP = [HPr protein]-O-phospho-L-serine + ADP + H(+). It carries out the reaction [HPr protein]-O-phospho-L-serine + phosphate + H(+) = [HPr protein]-L-serine + diphosphate. Catalyzes the ATP- as well as the pyrophosphate-dependent phosphorylation of a specific serine residue in HPr, a phosphocarrier protein of the phosphoenolpyruvate-dependent sugar phosphotransferase system (PTS). HprK/P also catalyzes the pyrophosphate-producing, inorganic phosphate-dependent dephosphorylation (phosphorolysis) of seryl-phosphorylated HPr (P-Ser-HPr). This Stenotrophomonas maltophilia (strain K279a) protein is HPr kinase/phosphorylase.